A 417-amino-acid polypeptide reads, in one-letter code: Serpin H1 (417 aa).

Positions 1–18 are cleaved as a signal peptide; that stretch reads MRSLLLLSAFCLLEAALA. Lysine 94 is modified (N6-succinyllysine). Asparagine 120 and asparagine 125 each carry an N-linked (GlcNAc...) asparagine glycan. Position 141 is a phosphoserine (serine 141). Position 206 is an N6-acetyllysine (lysine 206). Lysine 295 is subject to N6-succinyllysine. Lysine 318 bears the N6-acetyllysine mark. Positions 414–417 match the Prevents secretion from ER motif; it reads RDEL.

The protein belongs to the serpin family.

The protein localises to the endoplasmic reticulum lumen. Its function is as follows. Binds specifically to collagen. Could be involved as a chaperone in the biosynthetic pathway of collagen. The sequence is that of Serpin H1 (SERPINH1) from Pongo abelii (Sumatran orangutan).